The primary structure comprises 455 residues: L-serine dehydratase 2 (455 aa).

Belongs to the iron-sulfur dependent L-serine dehydratase family. [4Fe-4S] cluster is required as a cofactor. Activated by post-translational modification by a system involving at least three gene products. Activation is mimicked in vitro by iron and dithiothreitol. There is considerable evidence for a free-radical activation mechanism.

It catalyses the reaction L-serine = pyruvate + NH4(+). Its pathway is carbohydrate biosynthesis; gluconeogenesis. Its function is as follows. Also deaminates threonine, particularly when it is present in high concentration. The protein is L-serine dehydratase 2 (sdaB) of Escherichia coli (strain K12).